The following is a 344-amino-acid chain: Meiotic recombination protein DMC1 homolog B (344 aa).

133–140 is an ATP binding site; sequence GEFRSGKT. Arg-235 provides a ligand contact to dsDNA. The ssDNA site is built by Arg-235, Phe-238, Arg-241, Arg-247, and Arg-315. DsDNA-binding residues include Arg-241 and Arg-247.

This sequence belongs to the RecA family. DMC1 subfamily. In terms of tissue distribution, highly expressed in spikelets. Expressed in meiotic young panicles.

The protein localises to the nucleus. Its function is as follows. Recombinase that may participate in meiotic recombination, specifically in homologous strand assimilation, which is required for the resolution of meiotic double-strand breaks. Exhibits DNA-dependent ATPase activity when bound to single-stranded DNA (ssDNA). Mediates renaturation of homologous complementary strands as well as assimilation of single strands into homologous supercoiled duplexes leading to D-loop formation. Binds circular single-stranded DNA (ssDNA) and circular double-stranded DNA (dsDNA) in vitro. Catalyzes DNA homologous renaturation and DNA strand exchange. The rates of these activities are dependent on the state of ATP hydrolysis. Forms helical filaments along ssDNA and dsDNA, and promotes strand exchange between ssDNA and dsDNA with long DNA substrates of several thousand base pairs. The presence of the replication protein A is not required for this activity. Seems to be required for homologous pairing and subsequent chromosome segregation during male meiosis. May be not directly required for homologous pairing during male meiosis. Required for synaptonemal complex assembly and crossover formation. Functions redundantly with DMC1A. The sequence is that of Meiotic recombination protein DMC1 homolog B from Oryza sativa subsp. japonica (Rice).